The following is a 555-amino-acid chain: Urocanate hydratase (555 aa).

Residues 52–53 (GG), Q130, 176–178 (GMG), E196, R201, 242–243 (NA), 263–267 (QTSAH), 272–273 (YL), and Y321 contribute to the NAD(+) site. Residue C409 is part of the active site. G491 is a binding site for NAD(+).

Belongs to the urocanase family. It depends on NAD(+) as a cofactor.

The protein localises to the cytoplasm. The enzyme catalyses 4-imidazolone-5-propanoate = trans-urocanate + H2O. The protein operates within amino-acid degradation; L-histidine degradation into L-glutamate; N-formimidoyl-L-glutamate from L-histidine: step 2/3. In terms of biological role, catalyzes the conversion of urocanate to 4-imidazolone-5-propionate. The chain is Urocanate hydratase from Nocardioides sp. (strain ATCC BAA-499 / JS614).